The following is a 188-amino-acid chain: Peptidyl-tRNA hydrolase (188 aa).

Tyr18 contacts tRNA. His23 serves as the catalytic Proton acceptor. Tyr67, Asn69, and Asn115 together coordinate tRNA.

Belongs to the PTH family. Monomer.

It localises to the cytoplasm. The catalysed reaction is an N-acyl-L-alpha-aminoacyl-tRNA + H2O = an N-acyl-L-amino acid + a tRNA + H(+). Hydrolyzes ribosome-free peptidyl-tRNAs (with 1 or more amino acids incorporated), which drop off the ribosome during protein synthesis, or as a result of ribosome stalling. Functionally, catalyzes the release of premature peptidyl moieties from peptidyl-tRNA molecules trapped in stalled 50S ribosomal subunits, and thus maintains levels of free tRNAs and 50S ribosomes. In Salinibacter ruber (strain DSM 13855 / M31), this protein is Peptidyl-tRNA hydrolase.